The chain runs to 103 residues: MKTLLLTLVVVTIICLDLGYTEMCNMCVRPYPFMSSCCPEGQDRCYKSYWVNENGKQEAYHGKYPVILERGCVTACTGPGSGSIYNLYTCCPTNRCGSSSTSG.

Residues 1 to 21 (MKTLLLTLVVVTIICLDLGYT) form the signal peptide. 5 cysteine pairs are disulfide-bonded: Cys-24–Cys-45, Cys-27–Cys-37, Cys-38–Cys-72, Cys-76–Cys-90, and Cys-91–Cys-96.

The protein belongs to the three-finger toxin family. Ancestral subfamily. Orphan group XVII sub-subfamily. In terms of tissue distribution, expressed by the venom gland.

Its subcellular location is the secreted. In terms of biological role, interacts with high efficiency with both neuronal alpha-7/CHRNA7 and muscle type nicotinic acetylcholine receptors (nAChRs). Tested on human alpha-7/CHRNA7 nAChR (IC(50)=42 nM), T.californica muscle receptor (IC(50)=31 nM), L.stagnalis and A.californica acetylcholine-binding proteins (IC(50)=333 nM and 3.4 uM, respectively). The sequence is that of Toxin BMLCL from Bungarus multicinctus (Many-banded krait).